We begin with the raw amino-acid sequence, 1068 residues long: Receptor-like protein 13 (1068 aa).

The N-terminal stretch at 1-23 (MEGKLFLGQYLICVILLLGQLHG) is a signal peptide. Residues 24–986 (YKSCIEKERK…EADESTVDME (963 aa)) lie on the Extracellular side of the membrane. N59 and N97 each carry an N-linked (GlcNAc...) asparagine glycan. LRR repeat units follow at residues 104–129 (FEDVRSLDLSSSRSCEDCGFSGLFDD), 139–162 (LRNLEILDLSSHRFNNSIFPFLNA), 164–187 (TSLTTLFLTYNNMHSPFLVKEFKD), 188–212 (LTNLEHLDLRGNRFNGSIPTQDYNS), 216–239 (FRKLEILDLSDNLFNSRIFPFLNS), 241–264 (TSLKSLSLWGNNMGGPFPAKELRD), 265–290 (LTNVELLDLSRNRFNGSIPVRALFAL), 292–315 (KLKALDLSDNEFSSSVELQGKFAK), 325–349 (WKNMEELKLSNNKLAGQFPLCLTSL), 350–373 (TGLRVLDLSSNQLTGNVPSALANL), 375–397 (SLEYLSLFGNNFEGFFSLGLLAN), 398–423 (LSKLKVLRLDSQSNSLEVEFETSWKP), 424–447 (KFQLVVIALRSCNLEKVPHFLLHQ), 448–471 (KDLHHVDLSDNQIHGNFPSWLLEN), 472–497 (NTKLEVLLLQNNSFTSFQLPKSAHNL), 499–517 (FLNVSVNKFNHLFLQNFGW), 519–543 (LPHLVCVNLAYNGFQGNLPSSLDNM), 544–567 (KSIEFLDLSHNRFHGKLPRRFLKG), and 569–594 (YNLTILKLSHNKLSGEVFPEAANFTR). N153 is a glycosylation site (N-linked (GlcNAc...) asparagine). N202 carries N-linked (GlcNAc...) asparagine glycosylation. N279 carries N-linked (GlcNAc...) asparagine glycosylation. N-linked (GlcNAc...) asparagine glycosylation occurs at N397. N-linked (GlcNAc...) asparagine glycans are attached at residues N471, N482, and N501. N570 and N591 each carry an N-linked (GlcNAc...) asparagine glycan. An LRR 20; degenerate repeat occupies 596–615 (WVMSMDNNLFTGNIGKGFRS). LRR repeat units lie at residues 616-639 (LPSLNVLDISNNKLTGVIPSWIGE), 641-664 (QGLFALQLSNNMLEGEIPTSLFNI), 665-688 (SYLQLLDLSSNRLSGDIPPHVSSI), 690-710 (HGAVLLLQNNNLSGVIPDTLL), and 711-734 (LNVIVLDLRNNRLSGNLPEFINTQ). N-linked (GlcNAc...) asparagine glycosylation occurs at N663. N700 carries an N-linked (GlcNAc...) asparagine glycan. N-linked (GlcNAc...) asparagine glycans are attached at residues N735, N745, N771, N780, and N822. LRR repeat units lie at residues 736 to 757 (ISILLLRGNNFTGQIPHQFCSL) and 758 to 781 (SNIQLLDLSNNKFNGSIPSCLSNT). LRR repeat units follow at residues 846–870 (LKLLFGMDLSENELSGEIPVELGGL), 871–893 (VELEALNLSHNNLSGVILESFSG), 895–918 (KNVESLDLSFNRLQGPIPLQLTDM), and 920–943 (SLAVFNVSYNNLSGIVPQGRQFNT). N877 and N882 each carry an N-linked (GlcNAc...) asparagine glycan. N-linked (GlcNAc...) asparagine glycosylation is found at N925 and N930. Residues 987-1007 (SFYWSFVAAYVTILLGILASL) traverse the membrane as a helical segment. The Cytoplasmic segment spans residues 1008–1068 (SFDSPWSRAW…PPALFHKTRT (61 aa)).

It belongs to the RLP family.

The protein resides in the cell membrane. The polypeptide is Receptor-like protein 13 (Arabidopsis thaliana (Mouse-ear cress)).